The following is a 377-amino-acid chain: Modification methylase CviBIII (377 aa).

This sequence belongs to the N(4)/N(6)-methyltransferase family.

The catalysed reaction is a 2'-deoxyadenosine in DNA + S-adenosyl-L-methionine = an N(6)-methyl-2'-deoxyadenosine in DNA + S-adenosyl-L-homocysteine + H(+). Its function is as follows. A gamma subtype methylase that recognizes the double-stranded sequence 5'-TCGA-3' and methylates A-4 on both strands. In Paramecium bursaria Chlorella virus NC1A (PBCV-NC1A), this protein is Modification methylase CviBIII (CVIBIIIM).